The chain runs to 163 residues: Oocyte-secreted protein 1 (163 aa).

An N-terminal signal peptide occupies residues 1–21 (MKPSSGLRGLLVLFSLTWTCA).

Belongs to the PLAC1 family. In terms of tissue distribution, oocyte-specific.

It is found in the secreted. Functionally, may be involved in cell differentiation. This is Oocyte-secreted protein 1 (OOSP1) from Bos taurus (Bovine).